The chain runs to 129 residues: Small ribosomal subunit protein uS11 (129 aa).

This sequence belongs to the universal ribosomal protein uS11 family. As to quaternary structure, part of the 30S ribosomal subunit. Interacts with proteins S7 and S18. Binds to IF-3.

Located on the platform of the 30S subunit, it bridges several disparate RNA helices of the 16S rRNA. Forms part of the Shine-Dalgarno cleft in the 70S ribosome. The chain is Small ribosomal subunit protein uS11 from Cereibacter sphaeroides (strain ATCC 17029 / ATH 2.4.9) (Rhodobacter sphaeroides).